A 232-amino-acid polypeptide reads, in one-letter code: tRNA (guanine-N(1)-)-methyltransferase (232 aa).

Residues G114 and 134 to 139 each bind S-adenosyl-L-methionine; that span reads IGDYIL.

The protein belongs to the RNA methyltransferase TrmD family. In terms of assembly, homodimer.

Its subcellular location is the cytoplasm. The enzyme catalyses guanosine(37) in tRNA + S-adenosyl-L-methionine = N(1)-methylguanosine(37) in tRNA + S-adenosyl-L-homocysteine + H(+). Functionally, specifically methylates guanosine-37 in various tRNAs. In Wolbachia pipientis subsp. Culex pipiens (strain wPip), this protein is tRNA (guanine-N(1)-)-methyltransferase.